Here is a 433-residue protein sequence, read N- to C-terminus: Putative zinc metalloprotease BB_0118 (433 aa).

Residue H17 coordinates Zn(2+). E18 is a catalytic residue. Position 21 (H21) interacts with Zn(2+). The helical transmembrane segment at 98 to 120 threads the bilayer; that stretch reads ILIYFAGPLFNLIFSFIVFIFIS. One can recognise a PDZ domain in the interval 193 to 265; that stretch reads TVSLQDFLKE…VVEIKFSRNG (73 aa). 3 helical membrane passes run 334-356, 366-388, and 401-423; these read VSGP…LYWI, LAGM…FISF, and TIYS…GLFN.

This sequence belongs to the peptidase M50B family. Zn(2+) is required as a cofactor.

The protein localises to the cell inner membrane. The chain is Putative zinc metalloprotease BB_0118 from Borreliella burgdorferi (strain ATCC 35210 / DSM 4680 / CIP 102532 / B31) (Borrelia burgdorferi).